Reading from the N-terminus, the 387-residue chain is Chlorophyll synthase, chloroplastic (387 aa).

The N-terminal 57 residues, 1–57 (MTSILNTVSTIHSSRVTSVDRVGVLSLRNSDSVEFTRRRSGFSTLIYESPGRRFVVR), are a transit peptide targeting the chloroplast. The disordered stretch occupies residues 62-81 (DTDKVKSQTPDKAPAGGSSI). The next 7 membrane-spanning stretches (helical) occupy residues 182–202 (VITQVWVLLLGGLGIAGILDV), 210–230 (TVFYLALGGSLLSYIYSAPPL), 241–261 (FALGASYISLPWWAGQALFGT), 266–286 (VVVLTLLYSIAGLGIAIVNDF), 311–331 (WICVGAIDITQLSVAGYLLAS), 336–356 (YALALVALIIPQIVFQFKYFL), and 364–384 (VKYQASAQPFLVLGIFVTALA).

Belongs to the UbiA prenyltransferase family. Chlorophyll synthase subfamily. As to expression, low level in flower buds, flowers, stems, leaves, greening cotyledons and immature siliques, but not in mature siliques or seeds.

It localises to the plastid. Its subcellular location is the chloroplast membrane. The enzyme catalyses phytyl diphosphate + chlorophyllide a + H(+) = chlorophyll a + diphosphate. It participates in porphyrin-containing compound metabolism; chlorophyll biosynthesis. In terms of biological role, involved in one of the last steps of the biosynthesis of chlorophyll a. Catalyzes the esterification of chlorophillide a or b with a preference for geranylgeranyldiphosphate (GGPP) rather than for phytyldiphosphate (PhyPP). This chain is Chlorophyll synthase, chloroplastic (CHLG), found in Arabidopsis thaliana (Mouse-ear cress).